Consider the following 157-residue polypeptide: Cyclic pyranopterin monophosphate synthase (157 aa).

Substrate contacts are provided by residues 75-77 and 111-112; these read LCH and ME. The active site involves D126.

This sequence belongs to the MoaC family. Homohexamer; trimer of dimers.

It carries out the reaction (8S)-3',8-cyclo-7,8-dihydroguanosine 5'-triphosphate = cyclic pyranopterin phosphate + diphosphate. It participates in cofactor biosynthesis; molybdopterin biosynthesis. Its function is as follows. Catalyzes the conversion of (8S)-3',8-cyclo-7,8-dihydroguanosine 5'-triphosphate to cyclic pyranopterin monophosphate (cPMP). The chain is Cyclic pyranopterin monophosphate synthase from Novosphingobium aromaticivorans (strain ATCC 700278 / DSM 12444 / CCUG 56034 / CIP 105152 / NBRC 16084 / F199).